Consider the following 117-residue polypeptide: Large ribosomal subunit protein bL17 (117 aa).

The protein belongs to the bacterial ribosomal protein bL17 family. In terms of assembly, part of the 50S ribosomal subunit. Contacts protein L32.

In Campylobacter lari (strain RM2100 / D67 / ATCC BAA-1060), this protein is Large ribosomal subunit protein bL17.